A 213-amino-acid chain; its full sequence is Ripening-related protein 3 (213 aa).

Positions 1–32 are cleaved as a signal peptide; it reads MAGAMTMSRRRLSHALLLVLAILPNLAALAVA.

This sequence belongs to the kiwellin family.

It is found in the secreted. The protein is Ripening-related protein 3 of Oryza sativa subsp. japonica (Rice).